Consider the following 398-residue polypeptide: ATP-dependent (S)-NAD(P)H-hydrate dehydratase 1 (398 aa).

In terms of domain architecture, YjeF C-terminal spans 80-391 (LLRKAFQMIP…GYIGEAFELV (312 aa)). (6S)-NADPHX is bound by residues glycine 187 and 240 to 246 (NHVEFQR). ATP contacts are provided by residues 280 to 284 (KGSID) and 300 to 309 (GSPKRCGGQG). Aspartate 310 is a (6S)-NADPHX binding site.

It belongs to the NnrD/CARKD family. Requires Mg(2+) as cofactor.

The protein localises to the cytoplasm. The catalysed reaction is (6S)-NADHX + ATP = ADP + phosphate + NADH + H(+). The enzyme catalyses (6S)-NADPHX + ATP = ADP + phosphate + NADPH + H(+). Its function is as follows. Catalyzes the dehydration of the S-form of NAD(P)HX at the expense of ATP, which is converted to ADP. Together with NAD(P)HX epimerase, which catalyzes the epimerization of the S- and R-forms, the enzyme allows the repair of both epimers of NAD(P)HX, a damaged form of NAD(P)H that is a result of enzymatic or heat-dependent hydration. This Puccinia graminis f. sp. tritici (strain CRL 75-36-700-3 / race SCCL) (Black stem rust fungus) protein is ATP-dependent (S)-NAD(P)H-hydrate dehydratase 1.